The sequence spans 439 residues: Xylose isomerase (439 aa).

Residues His101 and Asp104 contribute to the active site. Residues Glu232, Glu268, His271, Asp296, Asp307, Asp309, and Asp339 each contribute to the Mg(2+) site.

This sequence belongs to the xylose isomerase family. As to quaternary structure, homotetramer. Mg(2+) is required as a cofactor.

The protein resides in the cytoplasm. The catalysed reaction is alpha-D-xylose = alpha-D-xylulofuranose. In Pseudoalteromonas atlantica (strain T6c / ATCC BAA-1087), this protein is Xylose isomerase.